The following is a 135-amino-acid chain: Small ribosomal subunit protein uS12 (135 aa).

A disordered region spans residues 1–24; sequence MPTINQLVRKGRHSKTTKSKSPAL. Residues 9–18 are compositionally biased toward basic residues; it reads RKGRHSKTTK. Position 102 is a 3-methylthioaspartic acid (aspartate 102).

It belongs to the universal ribosomal protein uS12 family. As to quaternary structure, part of the 30S ribosomal subunit. Contacts proteins S8 and S17. May interact with IF1 in the 30S initiation complex.

Its function is as follows. With S4 and S5 plays an important role in translational accuracy. Functionally, interacts with and stabilizes bases of the 16S rRNA that are involved in tRNA selection in the A site and with the mRNA backbone. Located at the interface of the 30S and 50S subunits, it traverses the body of the 30S subunit contacting proteins on the other side and probably holding the rRNA structure together. The combined cluster of proteins S8, S12 and S17 appears to hold together the shoulder and platform of the 30S subunit. This is Small ribosomal subunit protein uS12 from Lactobacillus delbrueckii subsp. bulgaricus (strain ATCC 11842 / DSM 20081 / BCRC 10696 / JCM 1002 / NBRC 13953 / NCIMB 11778 / NCTC 12712 / WDCM 00102 / Lb 14).